The primary structure comprises 154 residues: Transcriptional repressor NrdR (154 aa).

Residues 3 to 34 (CPFCAHPDTRVADSRLMEERNAVRRRRHCPNC) fold into a zinc finger. An ATP-cone domain is found at 49 to 139 (PAVIGPDKKR…LHKRFDNPAD (91 aa)).

Belongs to the NrdR family. Requires Zn(2+) as cofactor.

In terms of biological role, negatively regulates transcription of bacterial ribonucleotide reductase nrd genes and operons by binding to NrdR-boxes. This chain is Transcriptional repressor NrdR, found in Neisseria meningitidis serogroup B (strain ATCC BAA-335 / MC58).